Here is a 376-residue protein sequence, read N- to C-terminus: 23S rRNA (uracil(747)-C(5))-methyltransferase RlmC (376 aa).

Cys-3, Cys-11, Cys-14, and Cys-88 together coordinate [4Fe-4S] cluster. S-adenosyl-L-methionine is bound by residues Gln-213, Phe-242, Glu-263, and Asn-308. The Nucleophile role is filled by Cys-335.

The protein belongs to the class I-like SAM-binding methyltransferase superfamily. RNA M5U methyltransferase family. RlmC subfamily.

It carries out the reaction uridine(747) in 23S rRNA + S-adenosyl-L-methionine = 5-methyluridine(747) in 23S rRNA + S-adenosyl-L-homocysteine + H(+). Its function is as follows. Catalyzes the formation of 5-methyl-uridine at position 747 (m5U747) in 23S rRNA. In Vibrio vulnificus (strain CMCP6), this protein is 23S rRNA (uracil(747)-C(5))-methyltransferase RlmC.